A 104-amino-acid polypeptide reads, in one-letter code: Gastrin (104 aa).

Residues 1–21 (MQRLCAHALILVLALAAFCEA) form the signal peptide. Positions 22 to 58 (SWKPHSQLQDAPVAPGANKGQEPLRMDRLGPASHPRR) are excised as a propeptide. The disordered stretch occupies residues 26–70 (HSQLQDAPVAPGANKGQEPLRMDRLGPASHPRRQLGLQDPPHMVA). A Sulfotyrosine modification is found at Tyr-87. Residue Phe-92 is modified to Phenylalanine amide. A Phosphoserine modification is found at Ser-96. Residues 96–104 (SAEEGDQHP) constitute a propeptide that is removed on maturation.

The protein belongs to the gastrin/cholecystokinin family. In terms of processing, sulfation enhances proteolytic processing, and blocks peptide degradation. Levels of sulfation differ between proteolytically-cleaved gastrins and between tissues.

The protein localises to the secreted. Gastrin stimulates the stomach mucosa to produce and secrete hydrochloric acid and the pancreas to secrete its digestive enzymes. It also stimulates smooth muscle contraction and increases blood circulation and water secretion in the stomach and intestine. In Ovis aries (Sheep), this protein is Gastrin (GAST).